Here is a 258-residue protein sequence, read N- to C-terminus: Gamma-secretase subunit Aph-1b (258 aa).

7 helical membrane-spanning segments follow: residues 3-23 (VAVFFGCTFIAFGPAIALFMF), 32-52 (VIFLIAGAFFWLVSLLLSSLV), 70-90 (GLLIFGVVLSVLLQEAFRYGY), 118-138 (AYVSGLGFGFMSGAFSVVNIL), 161-181 (AFMTLAIILLHMFWGVVFFEA), 187-207 (WWALGAVVASHLVVSCLTFVN), and 214-234 (LIPTYIILSVMAVWAYLCAGG).

The protein belongs to the APH-1 family. As to quaternary structure, component of the gamma-secretase complex, a complex composed of a presenilin homodimer (PSEN1 or PSEN2), nicastrin (NCSTN), APH1 and PEN2.

The protein resides in the membrane. In terms of biological role, essential subunit of the gamma-secretase complex, an endoprotease complex that catalyzes the intramembrane cleavage of integral proteins such as Notch receptors. It may represent a stabilizing cofactor for the presenilin homodimer that promotes the formation of a stable complex. The polypeptide is Gamma-secretase subunit Aph-1b (aph1b) (Danio rerio (Zebrafish)).